The primary structure comprises 1489 residues: Sex-determining transformer protein 2 (1489 aa).

The signal sequence occupies residues 1-33 (MKLAFNKLLVASVVFTVLSFGLLLASLFTTTAT). 11 helical membrane passes run 454–474 (MIYF…AFAF), 489–509 (GFIT…ILID), 513–533 (LCYI…VTFI), 600–620 (YWFL…FFID), 622–642 (DVQK…FEEM), 749–769 (AVVV…LLFI), 931–951 (IFAA…FSIG), 958–978 (LAFA…VSLF), 986–1006 (YTNV…CDLA), 1041–1061 (VQIF…TAII), and 1066–1086 (AFFI…FNSL). Positions 1138–1288 (EFSIRPTENT…EQQEVTDDVA (151 aa)) are interaction with fem-3. Disordered stretches follow at residues 1143-1176 (PTEN…DPSM), 1233-1393 (LLRQ…YPPS), and 1412-1489 (RNLP…TPGL). Composition is skewed to basic and acidic residues over residues 1275–1298 (DPAK…EVRK), 1326–1340 (VSRE…REPR), and 1423–1433 (RPRDWDQRRLV). The segment at 1402 to 1423 (CEDVYWKYNERNLPDNVPMPPR) is MX regulatory domain; required for tra-1 binding. Pro residues predominate over residues 1444-1456 (VPPPGRSAIPIPP). A compositionally biased stretch (basic and acidic residues) spans 1460–1482 (RLRERRREQHLREQEARRNRPES).

In terms of assembly, interacts with tra-1 and fem-3.

It localises to the membrane. Plays a major role in controlling sexual cell fates. Promotes female development in XX animals where it sequesters one or more of the FEM proteins to the membrane thereby freeing the tra-1 protein (a putative transcription factor) to enter the nucleus and promote female development. In XO animals it acts as a receptor for her-1 which prevents it from binding to FEM proteins thereby repressing the activity of tra-1. Negatively regulates male development when bound to fem-3 and is required together with tra-1 for promoting spermatogenesis. Also required for feminizing tra-3 activity. This is Sex-determining transformer protein 2 from Caenorhabditis briggsae.